We begin with the raw amino-acid sequence, 288 residues long: MKKIKKAIIPAAGLGTRFLPATKAMPKEMLPILDKPTIQYIVEEASKAGIEDIIIVTGKHKRAIEDHFDNQKELEMVLENKGKADLLEKVQYSTDLANIFYVRQKEQKGLGHAIHTAKQFIGNEPFAVLLGDDIVESDTPAIKQLMDVYEETGHSVIGVQEVPESDTHRYGVIDPSAKEGSRYEVRQFVEKPKQGTAPSNLAIMGRYVLTPEIFDYLETQQEGAGNEIQLTDAIERMNSKQQVYAYDFEGNRYDVGEKLGFVKTTIEYALKDPEMSQDLKAFIKQLDI.

The protein belongs to the UDPGP type 2 family.

The catalysed reaction is alpha-D-glucose 1-phosphate + UTP + H(+) = UDP-alpha-D-glucose + diphosphate. It functions in the pathway glycolipid metabolism; diglucosyl-diacylglycerol biosynthesis. In terms of biological role, catalyzes the formation of UDP-glucose from glucose-1-phosphate and UTP. This is an intermediate step in the biosynthesis of diglucosyl-diacylglycerol (Glc2-DAG), i.e. a glycolipid found in the membrane, which is also used as a membrane anchor for lipoteichoic acid (LTA). The chain is UTP--glucose-1-phosphate uridylyltransferase (gtaB) from Staphylococcus epidermidis (strain ATCC 35984 / DSM 28319 / BCRC 17069 / CCUG 31568 / BM 3577 / RP62A).